A 248-amino-acid chain; its full sequence is Inner membrane protein pE248R (248 aa).

Gly-2 carries the N-myristoyl glycine; by host lipid modification. Residues 2–199 are Cytoplasmic-facing; it reads GGSTSKNSFK…ADAISAVFKN (198 aa). The chain crosses the membrane as a helical span at residues 200–220; sequence IMVAAVVIVLIIVGFIAVFYF. At 221 to 248 the chain is on the extracellular side; it reads LHSRHRHEEEEEAEPLISNKVLKNAAVS.

The protein belongs to the asfivirus E248R family. As to quaternary structure, interacts with A151R.

The protein resides in the host membrane. Its subcellular location is the virion membrane. Functionally, essential for viral fusion with host endosomal membrane and core release. This Ornithodoros (relapsing fever ticks) protein is Inner membrane protein pE248R.